The following is a 295-amino-acid chain: Protoheme IX farnesyltransferase (295 aa).

A run of 9 helical transmembrane segments spans residues 9 to 29, 36 to 56, 80 to 100, 108 to 128, 135 to 155, 163 to 183, 209 to 229, 230 to 250, and 265 to 285; these read ITKPGIIFGNVLSVAGGFFLA, FGVFLAAVIGTSLVVASGCVF, LVSLKLALLYATLLGIAGVAL, LAALFAVIGFVIYVGFYSLYL, GTLVGSLSGAMPPVIGYCAVS, LTLLVMFSLWQMPHSYAIAIF, ILLYILAFLVATLMLTVGGYA, GLNYLAVAAGMGMYWLYMAWK, and FVFSIFTITALSVMMSVDFQV.

It belongs to the UbiA prenyltransferase family. Protoheme IX farnesyltransferase subfamily.

Its subcellular location is the cell inner membrane. The catalysed reaction is heme b + (2E,6E)-farnesyl diphosphate + H2O = Fe(II)-heme o + diphosphate. It participates in porphyrin-containing compound metabolism; heme O biosynthesis; heme O from protoheme: step 1/1. Converts heme B (protoheme IX) to heme O by substitution of the vinyl group on carbon 2 of heme B porphyrin ring with a hydroxyethyl farnesyl side group. This is Protoheme IX farnesyltransferase from Pseudomonas syringae pv. tomato (strain ATCC BAA-871 / DC3000).